Reading from the N-terminus, the 179-residue chain is Large ribosomal subunit protein uL5c (179 aa).

It belongs to the universal ribosomal protein uL5 family. In terms of assembly, part of the 50S ribosomal subunit; contacts the 5S rRNA.

The protein resides in the plastid. Its subcellular location is the organellar chromatophore. In terms of biological role, binds 5S rRNA, forms part of the central protuberance of the 50S subunit. This is Large ribosomal subunit protein uL5c (rpl5) from Paulinella chromatophora.